Here is a 199-residue protein sequence, read N- to C-terminus: Imidazole glycerol phosphate synthase subunit HisH 2 (199 aa).

The Glutamine amidotransferase type-1 domain occupies 1–199 (MIAVIDVSGN…NNFLSLESTC (199 aa)). Cys-76 acts as the Nucleophile in catalysis. Catalysis depends on residues His-177 and Glu-179.

In terms of assembly, heterodimer of HisH and HisF.

It localises to the cytoplasm. It catalyses the reaction 5-[(5-phospho-1-deoxy-D-ribulos-1-ylimino)methylamino]-1-(5-phospho-beta-D-ribosyl)imidazole-4-carboxamide + L-glutamine = D-erythro-1-(imidazol-4-yl)glycerol 3-phosphate + 5-amino-1-(5-phospho-beta-D-ribosyl)imidazole-4-carboxamide + L-glutamate + H(+). It carries out the reaction L-glutamine + H2O = L-glutamate + NH4(+). It functions in the pathway amino-acid biosynthesis; L-histidine biosynthesis; L-histidine from 5-phospho-alpha-D-ribose 1-diphosphate: step 5/9. IGPS catalyzes the conversion of PRFAR and glutamine to IGP, AICAR and glutamate. The HisH subunit provides the glutamine amidotransferase activity that produces the ammonia necessary to HisF for the synthesis of IGP and AICAR. The polypeptide is Imidazole glycerol phosphate synthase subunit HisH 2 (Legionella pneumophila (strain Paris)).